A 160-amino-acid polypeptide reads, in one-letter code: 3-hydroxyacyl-[acyl-carrier-protein] dehydratase FabZ (160 aa).

His63 is an active-site residue.

This sequence belongs to the thioester dehydratase family. FabZ subfamily.

The protein resides in the cytoplasm. The catalysed reaction is a (3R)-hydroxyacyl-[ACP] = a (2E)-enoyl-[ACP] + H2O. Functionally, involved in unsaturated fatty acids biosynthesis. Catalyzes the dehydration of short chain beta-hydroxyacyl-ACPs and long chain saturated and unsaturated beta-hydroxyacyl-ACPs. This Xylella fastidiosa (strain M12) protein is 3-hydroxyacyl-[acyl-carrier-protein] dehydratase FabZ.